We begin with the raw amino-acid sequence, 518 residues long: MGSIIISALLALVIGAVVGFFVRKSIAEAKIGGAKAAAEQLIEEAKREADALKKEALLEAKDEIHKLRTEAERDIRDRRSELQKQENRLMQKEENLDRKDEALNKREALLEAKEEALNERQQHIEQMESKVEALVKQQQAELERISGLTRDDARQLILERVEKELSHEIAMMIKEAETRAKEEADKRAKAILSLAIQRCAADHVAETTVSVVNLPNDEMKGRIIGREGRNIRTLETLTGIDLIIDDTPEAVILSGFDPIRRETARIALDKLVQDGRIHPARIEEMVEKARREVDEHIREVGEQTTFEVGVHGLHPDLIKILGRLKFRTSYGQNVLKHSVEVAFLAGLMAAELGEDEMLARRAGLLHDIGKAIDHEVEGSHVEIGVELATKYKEHPVVINSIASHHGDTEPTSVIAVLVAAADALSAARPGARSETLENYIRRLEKLEEIAESYEGVEKSYAIQAGREVRIMVKPDMIDDLEAHRLARDIRKRIEEELDYPGHIKVTVIRETRAVEYAK.

Residues 2–22 form a helical membrane-spanning segment; it reads GSIIISALLALVIGAVVGFFV. One can recognise a KH domain in the interval 208-271; the sequence is TVSVVNLPND…ETARIALDKL (64 aa). The region spanning 334 to 427 is the HD domain; sequence VLKHSVEVAF…VAAADALSAA (94 aa).

Belongs to the RNase Y family.

The protein localises to the cell membrane. In terms of biological role, endoribonuclease that initiates mRNA decay. The protein is Ribonuclease Y of Geobacillus kaustophilus (strain HTA426).